The primary structure comprises 177 residues: Tubulin beta chain (177 aa).

The segment at 156–177 is disordered; sequence YQDATAEEEGEFDEEEGDEEAA. Over residues 160–177 the composition is skewed to acidic residues; the sequence is TAEEEGEFDEEEGDEEAA.

Belongs to the tubulin family. In terms of assembly, dimer of alpha and beta chains. A typical microtubule is a hollow water-filled tube with an outer diameter of 25 nm and an inner diameter of 15 nM. Alpha-beta heterodimers associate head-to-tail to form protofilaments running lengthwise along the microtubule wall with the beta-tubulin subunit facing the microtubule plus end conferring a structural polarity. Microtubules usually have 13 protofilaments but different protofilament numbers can be found in some organisms and specialized cells. The cofactor is Mg(2+).

The protein localises to the cytoplasm. It is found in the cytoskeleton. Functionally, tubulin is the major constituent of microtubules, a cylinder consisting of laterally associated linear protofilaments composed of alpha- and beta-tubulin heterodimers. Microtubules grow by the addition of GTP-tubulin dimers to the microtubule end, where a stabilizing cap forms. Below the cap, tubulin dimers are in GDP-bound state, owing to GTPase activity of alpha-tubulin. This Lytechinus pictus (Painted sea urchin) protein is Tubulin beta chain.